A 124-amino-acid polypeptide reads, in one-letter code: Small ribosomal subunit protein uS12 (124 aa).

Asp89 bears the 3-methylthioaspartic acid mark.

Belongs to the universal ribosomal protein uS12 family. In terms of assembly, part of the 30S ribosomal subunit. Contacts proteins S8 and S17. May interact with IF1 in the 30S initiation complex.

With S4 and S5 plays an important role in translational accuracy. Functionally, interacts with and stabilizes bases of the 16S rRNA that are involved in tRNA selection in the A site and with the mRNA backbone. Located at the interface of the 30S and 50S subunits, it traverses the body of the 30S subunit contacting proteins on the other side and probably holding the rRNA structure together. The combined cluster of proteins S8, S12 and S17 appears to hold together the shoulder and platform of the 30S subunit. This chain is Small ribosomal subunit protein uS12, found in Shewanella sp. (strain ANA-3).